A 289-amino-acid chain; its full sequence is Rhodopsin (289 aa).

Residues 1-7 (YLVNPAG) lie on the Extracellular side of the membrane. Residues 8-32 (YAALGAYMFLLILIGSPVNFLTLYV) traverse the membrane as a helical segment. Residues 33 to 44 (TLEHKKLRTPLN) lie on the Cytoplasmic side of the membrane. A helical membrane pass occupies residues 45-67 (YILLNLAVADLFMVLGGFTTTMY). The Extracellular segment spans residues 68–81 (TSMHGYSVLGRLGC). Cys81 and Cys158 are disulfide-bonded. Residues 82-104 (ILEGFFATLGGEIALWSLVVLAI) traverse the membrane as a helical segment. The 'Ionic lock' involved in activated form stabilization motif lies at 105–107 (ERW). The Cytoplasmic portion of the chain corresponds to 105–123 (ERWIVVCKPISNFRFTEDH). A helical membrane pass occupies residues 124 to 144 (AIMGLAFSWVMALACAVPPLV). Over 145–173 (GWSRYIPEGMQCSCGVDYYTRAEGFNNES) the chain is Extracellular. Asn171 is a glycosylation site (N-linked (GlcNAc...) asparagine). A helical transmembrane segment spans residues 174 to 195 (FVIYMFIVHFLIPLSVIFFCYG). Residues 196 to 223 (RLLCAVKEAAAAQQESETTQRPEKEVTR) are Cytoplasmic-facing. The chain crosses the membrane as a helical span at residues 224 to 245 (MVVIMVIAFLVCCLPNASVAWW). The Extracellular segment spans residues 246–257 (IFCNQGSDFGPI). Residues 258 to 279 (FMTLPSFFAKSAAIYNPMIYIC) traverse the membrane as a helical segment. Lys267 is modified (N6-(retinylidene)lysine). At 280–289 (MNKQFRHCMI) the chain is on the cytoplasmic side.

Belongs to the G-protein coupled receptor 1 family. Opsin subfamily. Phosphorylated on some or all of the serine and threonine residues present in the C-terminal region. Post-translationally, contains one covalently linked retinal chromophore.

Its subcellular location is the membrane. The protein localises to the cell projection. The protein resides in the cilium. It is found in the photoreceptor outer segment. Functionally, photoreceptor required for image-forming vision at low light intensity. While most salt water fish species use retinal as chromophore, most freshwater fish use 3-dehydroretinal, or a mixture of retinal and 3-dehydroretinal. Light-induced isomerization of 11-cis to all-trans retinal triggers a conformational change that activates signaling via G-proteins. Subsequent receptor phosphorylation mediates displacement of the bound G-protein alpha subunit by arrestin and terminates signaling. This chain is Rhodopsin (rho), found in Limnocottus bergianus.